Reading from the N-terminus, the 578-residue chain is Glucans biosynthesis protein G (578 aa).

The signal sequence occupies residues 1 to 37 (MIVSPCIAPRIPGTRLRKAMLAGVALVGLLSAGQLWA). The tract at residues 511–578 (VPVEAPKPAK…TWSYQLPADE (68 aa)) is disordered. The segment covering 517–543 (KPAKDSKQDKAAAKHAHAKAEKAKAEQ) has biased composition (basic and acidic residues). Positions 544–554 (PAEQPAADAAS) are enriched in low complexity.

The protein belongs to the OpgD/OpgG family.

The protein resides in the periplasm. It functions in the pathway glycan metabolism; osmoregulated periplasmic glucan (OPG) biosynthesis. Functionally, involved in the biosynthesis of osmoregulated periplasmic glucans (OPGs). The chain is Glucans biosynthesis protein G from Pseudomonas entomophila (strain L48).